The primary structure comprises 128 residues: Sirohydrochlorin cobaltochelatase (128 aa).

Residue His9 is the Proton acceptor of the active site. Residue His9 coordinates Co(2+). Substrate is bound by residues Lys43 and 68–73 (FATGTH). His73 is a Co(2+) binding site.

It belongs to the CbiX family. CbiXS subfamily. Homotetramer; dimer of dimers.

The enzyme catalyses Co-sirohydrochlorin + 2 H(+) = sirohydrochlorin + Co(2+). The protein operates within cofactor biosynthesis; adenosylcobalamin biosynthesis; cob(II)yrinate a,c-diamide from sirohydrochlorin (anaerobic route): step 1/10. Functionally, catalyzes the insertion of Co(2+) into sirohydrochlorin as part of the anaerobic pathway to cobalamin biosynthesis. The protein is Sirohydrochlorin cobaltochelatase of Saccharolobus islandicus (strain Y.G.57.14 / Yellowstone #1) (Sulfolobus islandicus).